The sequence spans 252 residues: PHD finger protein ALFIN-LIKE 7 (252 aa).

A disordered region spans residues 141–193 (AKQSKDQSANHNSSRSKSSGGKPRHSESHTKASKMSPPPRKEDESGDEDEDDE). Positions 149–161 (ANHNSSRSKSSGG) are enriched in low complexity. At serine 176 the chain carries Phosphoserine. Acidic residues predominate over residues 184-193 (ESGDEDEDDE). A PHD-type zinc finger spans residues 195-247 (GAVCGACGDNYGGDEFWICCDACEKWFHGKCVKITPAKAEHIKHYKCPSCTTS).

This sequence belongs to the Alfin family. Interacts with H3K4me3 and to a lesser extent with H3K4me2. Ubiquitously expressed.

It is found in the nucleus. In terms of biological role, histone-binding component that specifically recognizes H3 tails trimethylated on 'Lys-4' (H3K4me3), which mark transcription start sites of virtually all active genes. In Arabidopsis thaliana (Mouse-ear cress), this protein is PHD finger protein ALFIN-LIKE 7 (AL7).